A 214-amino-acid polypeptide reads, in one-letter code: uncharacterized protein (214 aa).

A signal peptide spans 1-17 (MLKKIIILFLGVFVLSG). Cysteine 18 carries N-palmitoyl cysteine lipidation. A lipid anchor (S-diacylglycerol cysteine) is attached at cysteine 18. A compositionally biased stretch (acidic residues) spans 64–77 (DNLDDPEDDDDDYD). 3 disordered regions span residues 64–83 (DNLD…LRGE), 106–138 (YKAE…KERK), and 166–197 (TANQ…SKVK). Residues 120 to 162 (TLSKANKKVRKDNTDKERKMQEELDQIKAMLRETKRDISKYTC) adopt a coiled-coil conformation.

It is found in the cell membrane. This is an uncharacterized protein from Rickettsia bellii (strain RML369-C).